Consider the following 615-residue polypeptide: Dihydroxy-acid dehydratase (615 aa).

Residue D81 coordinates Mg(2+). C122 is a [2Fe-2S] cluster binding site. The Mg(2+) site is built by D123 and K124. K124 is subject to N6-carboxylysine. C195 provides a ligand contact to [2Fe-2S] cluster. E491 lines the Mg(2+) pocket. The active-site Proton acceptor is S517.

Belongs to the IlvD/Edd family. In terms of assembly, homodimer. Requires [2Fe-2S] cluster as cofactor. Mg(2+) is required as a cofactor.

It catalyses the reaction (2R)-2,3-dihydroxy-3-methylbutanoate = 3-methyl-2-oxobutanoate + H2O. The catalysed reaction is (2R,3R)-2,3-dihydroxy-3-methylpentanoate = (S)-3-methyl-2-oxopentanoate + H2O. The protein operates within amino-acid biosynthesis; L-isoleucine biosynthesis; L-isoleucine from 2-oxobutanoate: step 3/4. Its pathway is amino-acid biosynthesis; L-valine biosynthesis; L-valine from pyruvate: step 3/4. Its function is as follows. Functions in the biosynthesis of branched-chain amino acids. Catalyzes the dehydration of (2R,3R)-2,3-dihydroxy-3-methylpentanoate (2,3-dihydroxy-3-methylvalerate) into 2-oxo-3-methylpentanoate (2-oxo-3-methylvalerate) and of (2R)-2,3-dihydroxy-3-methylbutanoate (2,3-dihydroxyisovalerate) into 2-oxo-3-methylbutanoate (2-oxoisovalerate), the penultimate precursor to L-isoleucine and L-valine, respectively. The protein is Dihydroxy-acid dehydratase of Pseudoalteromonas atlantica (strain T6c / ATCC BAA-1087).